A 420-amino-acid polypeptide reads, in one-letter code: Trophoblast glycoprotein (420 aa).

The N-terminal stretch at 1-34 (MPGGCSRGPAAGDGRLRLARLALVLLGWVSSSSS) is a signal peptide. The Extracellular portion of the chain corresponds to 35–355 (TSSASSSSSS…PILPPSLQTS (321 aa)). Positions 53–91 (SAQPPLPDQCPALCECSEAARTVKCVNRNLTEVPTDLPL) constitute an LRRNT domain. 2 cysteine pairs are disulfide-bonded: C62-C68 and C66-C77. N81 carries an N-linked (GlcNAc...) asparagine glycan. LRR repeat units follow at residues 92–113 (YVRNLFLTGNQLAVLPAGAFAR), 116–139 (PLAELAALNLSGSRLDEVRGGAFE), 141–163 (LPSLRQLDLSHNPLAYLSPFAFS), 172–204 (PSPLVELILNHIVPPDDKRQNRSFEGMVAAALV), 209–232 (LQGLHLLELASNHFLYLPRDVLAQ), 233–255 (LPSLRYLDLSNNSLVSLTYVSFR), and 256–275 (NLTHLESLHLEDNALKVLHN). An N-linked (GlcNAc...) asparagine glycan is attached at N124. Residue N275 is glycosylated (N-linked (GlcNAc...) asparagine). The region spanning 283 to 346 (GLPHVRVFLD…LNSADLDCDP (64 aa)) is the LRRCT domain. 2 disulfides stabilise this stretch: C298-C323 and C300-C344. Residues 356-376 (YVFLGIVLALIGAIFLLVLYL) form a helical membrane-spanning segment. The Cytoplasmic portion of the chain corresponds to 377-420 (NRKGIKKWMHNIRDACRDHMEGYHYRYEINADPRLTNLSSNSDV). At S418 the chain carries Phosphoserine.

Highly glycosylated.

The protein resides in the cell membrane. Its function is as follows. May function as an inhibitor of Wnt/beta-catenin signaling by indirectly interacting with LRP6 and blocking Wnt3a-dependent LRP6 internalization. The chain is Trophoblast glycoprotein (TPBG) from Macaca fascicularis (Crab-eating macaque).